A 229-amino-acid chain; its full sequence is Pyridoxal phosphate homeostasis protein (229 aa).

Lys36 is subject to N6-(pyridoxal phosphate)lysine.

Belongs to the pyridoxal phosphate-binding protein YggS/PROSC family. As to quaternary structure, monomer.

In terms of biological role, pyridoxal 5'-phosphate (PLP)-binding protein, which is involved in PLP homeostasis. This Buchnera aphidicola subsp. Schizaphis graminum (strain Sg) protein is Pyridoxal phosphate homeostasis protein.